We begin with the raw amino-acid sequence, 151 residues long: Deoxyuridine 5'-triphosphate nucleotidohydrolase (151 aa).

Substrate is bound by residues 70-72 (RSG), N83, 87-89 (LID), and M97.

This sequence belongs to the dUTPase family. It depends on Mg(2+) as a cofactor.

It catalyses the reaction dUTP + H2O = dUMP + diphosphate + H(+). It participates in pyrimidine metabolism; dUMP biosynthesis; dUMP from dCTP (dUTP route): step 2/2. Functionally, this enzyme is involved in nucleotide metabolism: it produces dUMP, the immediate precursor of thymidine nucleotides and it decreases the intracellular concentration of dUTP so that uracil cannot be incorporated into DNA. The protein is Deoxyuridine 5'-triphosphate nucleotidohydrolase of Actinobacillus pleuropneumoniae serotype 7 (strain AP76).